A 435-amino-acid chain; its full sequence is Methylenetetrahydrofolate--tRNA-(uracil-5-)-methyltransferase TrmFO (435 aa).

Residue 9–14 participates in FAD binding; sequence GAGLAG.

It belongs to the MnmG family. TrmFO subfamily. Requires FAD as cofactor.

The protein resides in the cytoplasm. The enzyme catalyses uridine(54) in tRNA + (6R)-5,10-methylene-5,6,7,8-tetrahydrofolate + NADH + H(+) = 5-methyluridine(54) in tRNA + (6S)-5,6,7,8-tetrahydrofolate + NAD(+). It carries out the reaction uridine(54) in tRNA + (6R)-5,10-methylene-5,6,7,8-tetrahydrofolate + NADPH + H(+) = 5-methyluridine(54) in tRNA + (6S)-5,6,7,8-tetrahydrofolate + NADP(+). Its function is as follows. Catalyzes the folate-dependent formation of 5-methyl-uridine at position 54 (M-5-U54) in all tRNAs. In Enterococcus faecalis (strain ATCC 700802 / V583), this protein is Methylenetetrahydrofolate--tRNA-(uracil-5-)-methyltransferase TrmFO.